A 440-amino-acid chain; its full sequence is Tubby-like F-box protein 13 (440 aa).

The region spanning 51–106 (SCWASLPPELLRDIIERLEESEATWPSRKHVVACAGVCRTWREMCKEIVKNPELCG) is the F-box domain.

Belongs to the TUB family. In terms of tissue distribution, ubiquitous.

The protein is Tubby-like F-box protein 13 (TULP13) of Oryza sativa subsp. japonica (Rice).